A 312-amino-acid polypeptide reads, in one-letter code: Glyoxylate/hydroxypyruvate reductase A (312 aa).

Residue Arg227 is part of the active site. Catalysis depends on His275, which acts as the Proton donor.

The protein belongs to the D-isomer specific 2-hydroxyacid dehydrogenase family. GhrA subfamily.

The protein resides in the cytoplasm. It catalyses the reaction glycolate + NADP(+) = glyoxylate + NADPH + H(+). It carries out the reaction (R)-glycerate + NAD(+) = 3-hydroxypyruvate + NADH + H(+). The catalysed reaction is (R)-glycerate + NADP(+) = 3-hydroxypyruvate + NADPH + H(+). Catalyzes the NADPH-dependent reduction of glyoxylate and hydroxypyruvate into glycolate and glycerate, respectively. The chain is Glyoxylate/hydroxypyruvate reductase A from Escherichia coli O127:H6 (strain E2348/69 / EPEC).